Consider the following 793-residue polypeptide: Sucrose synthase (793 aa).

The tract at residues 263-742 (MISRILIVSI…ALARVAERYT (480 aa)) is GT-B glycosyltransferase.

Belongs to the glycosyltransferase 1 family. In terms of assembly, homotetramer.

The catalysed reaction is an NDP-alpha-D-glucose + D-fructose = a ribonucleoside 5'-diphosphate + sucrose + H(+). It catalyses the reaction ADP-alpha-D-glucose + D-fructose = sucrose + ADP + H(+). In terms of biological role, catalyzes the reversible conversion of sucrose and a nucleotide disphosphate (NDP) into fructose and NDP-glucose; although the reaction is freely reversible in vitro, the physiological reaction seems to be sucrose cleavage. Unlike characterized plant enzymes prefers ADP as a cosubstrate, whereas plants prefer UDP. The KM for sucrose is 45-fold lower in the presence of ADP than UDP. Its preference for ADP over UDP suggests it may directly link sucrose and glycogen metabolism. This Acidithiobacillus caldus (strain ATCC 51756 / DSM 8584 / KU) protein is Sucrose synthase.